Here is a 148-residue protein sequence, read N- to C-terminus: Translation initiation factor 2 subunit beta (148 aa).

It belongs to the eIF-2-beta/eIF-5 family. As to quaternary structure, heterotrimer composed of an alpha, a beta and a gamma chain.

In terms of biological role, eIF-2 functions in the early steps of protein synthesis by forming a ternary complex with GTP and initiator tRNA. The protein is Translation initiation factor 2 subunit beta (eif2b) of Aeropyrum pernix (strain ATCC 700893 / DSM 11879 / JCM 9820 / NBRC 100138 / K1).